We begin with the raw amino-acid sequence, 296 residues long: PYK10-binding protein 2 (296 aa).

The interval methionine 1–serine 20 is disordered. Alanine 2 carries the post-translational modification N-acetylalanine. 2 Jacalin-type lectin domains span residues alanine 2–proline 142 and alanine 150–proline 293.

It belongs to the jacalin lectin family. Component of the PYK10 complex, at least composed of PYK10/BGLU23, BGLU21, BGLU22, JAL22, JAL23, PBP1/JAL30, PBP2/JAL31, JAL32, JAL33, JAL34, JAL35, GLL22 and GLL23.

Functionally, polymerizer-type lectin that may facilitate the correct polymerization of BGLU23/PYK10 upon tissue damage. Activates BGLU21, BGLU22 and BGLU23. The polypeptide is PYK10-binding protein 2 (PBP2) (Arabidopsis thaliana (Mouse-ear cress)).